The following is a 506-amino-acid chain: RNA-splicing ligase RtcB homolog (506 aa).

Residues Asp120, Cys123, His228, His260, and His354 each coordinate Mn(2+). 227–231 (NHYAE) serves as a coordination point for GMP. Residues 354 to 355 (HN), 403 to 406 (GGSM), Ser410, 429 to 432 (HGAG), and Lys505 contribute to the GMP site. His429 acts as the GMP-histidine intermediate in catalysis.

The protein belongs to the RtcB family. As to quaternary structure, catalytic component of the tRNA-splicing ligase complex. Mn(2+) serves as cofactor.

The enzyme catalyses a 3'-end 3'-phospho-ribonucleotide-RNA + a 5'-end dephospho-ribonucleoside-RNA + GTP = a ribonucleotidyl-ribonucleotide-RNA + GMP + diphosphate. It catalyses the reaction a 3'-end 2',3'-cyclophospho-ribonucleotide-RNA + a 5'-end dephospho-ribonucleoside-RNA + GTP + H2O = a ribonucleotidyl-ribonucleotide-RNA + GMP + diphosphate + H(+). In terms of biological role, catalytic subunit of the tRNA-splicing ligase complex that acts by directly joining spliced tRNA halves to mature-sized tRNAs by incorporating the precursor-derived splice junction phosphate into the mature tRNA as a canonical 3',5'-phosphodiester. May act as an RNA ligase with broad substrate specificity, and may function toward other RNAs. The sequence is that of RNA-splicing ligase RtcB homolog from Aedes aegypti (Yellowfever mosquito).